A 233-amino-acid polypeptide reads, in one-letter code: Uracil-DNA glycosylase (233 aa).

The active-site Proton acceptor is the aspartate 70.

Belongs to the uracil-DNA glycosylase (UDG) superfamily. UNG family.

The protein localises to the cytoplasm. The catalysed reaction is Hydrolyzes single-stranded DNA or mismatched double-stranded DNA and polynucleotides, releasing free uracil.. Its function is as follows. Excises uracil residues from the DNA which can arise as a result of misincorporation of dUMP residues by DNA polymerase or due to deamination of cytosine. The chain is Uracil-DNA glycosylase from Oleidesulfovibrio alaskensis (strain ATCC BAA-1058 / DSM 17464 / G20) (Desulfovibrio alaskensis).